The primary structure comprises 342 residues: Holliday junction branch migration complex subunit RuvB (342 aa).

Residues 1-181 (MENRMVTPFD…FGMLCAMEFY (181 aa)) form a large ATPase domain (RuvB-L) region. ATP contacts are provided by residues Leu-20, Arg-21, Gly-62, Lys-65, Thr-66, Thr-67, 128 to 130 (EDY), Arg-171, Tyr-181, and Arg-218. Residue Thr-66 coordinates Mg(2+). The tract at residues 182-252 (TDEELMEIVV…GAKAALDLLE (71 aa)) is small ATPAse domain (RuvB-S). A head domain (RuvB-H) region spans residues 255-342 (KEGLDKIDNK…KDNQVSIFNK (88 aa)). The DNA site is built by Arg-310 and Arg-315.

Belongs to the RuvB family. Homohexamer. Forms an RuvA(8)-RuvB(12)-Holliday junction (HJ) complex. HJ DNA is sandwiched between 2 RuvA tetramers; dsDNA enters through RuvA and exits via RuvB. An RuvB hexamer assembles on each DNA strand where it exits the tetramer. Each RuvB hexamer is contacted by two RuvA subunits (via domain III) on 2 adjacent RuvB subunits; this complex drives branch migration. In the full resolvosome a probable DNA-RuvA(4)-RuvB(12)-RuvC(2) complex forms which resolves the HJ.

The protein resides in the cytoplasm. It catalyses the reaction ATP + H2O = ADP + phosphate + H(+). Functionally, the RuvA-RuvB-RuvC complex processes Holliday junction (HJ) DNA during genetic recombination and DNA repair, while the RuvA-RuvB complex plays an important role in the rescue of blocked DNA replication forks via replication fork reversal (RFR). RuvA specifically binds to HJ cruciform DNA, conferring on it an open structure. The RuvB hexamer acts as an ATP-dependent pump, pulling dsDNA into and through the RuvAB complex. RuvB forms 2 homohexamers on either side of HJ DNA bound by 1 or 2 RuvA tetramers; 4 subunits per hexamer contact DNA at a time. Coordinated motions by a converter formed by DNA-disengaged RuvB subunits stimulates ATP hydrolysis and nucleotide exchange. Immobilization of the converter enables RuvB to convert the ATP-contained energy into a lever motion, pulling 2 nucleotides of DNA out of the RuvA tetramer per ATP hydrolyzed, thus driving DNA branch migration. The RuvB motors rotate together with the DNA substrate, which together with the progressing nucleotide cycle form the mechanistic basis for DNA recombination by continuous HJ branch migration. Branch migration allows RuvC to scan DNA until it finds its consensus sequence, where it cleaves and resolves cruciform DNA. The sequence is that of Holliday junction branch migration complex subunit RuvB from Clostridium botulinum (strain 657 / Type Ba4).